A 112-amino-acid polypeptide reads, in one-letter code: UPF0375 protein R05A10.4 (112 aa).

The N-terminal stretch at 1–19 (MNLSIFSAIIFSITIASSA) is a signal peptide. Residue Asn-59 is glycosylated (N-linked (GlcNAc...) asparagine).

It belongs to the UPF0375 family.

The protein resides in the secreted. The protein is UPF0375 protein R05A10.4 of Caenorhabditis elegans.